The chain runs to 222 residues: 7-cyano-7-deazaguanine synthase (222 aa).

8-18 (LSGGMDSTTAA) is an ATP binding site. Residues C187, C195, C198, and C201 each contribute to the Zn(2+) site.

This sequence belongs to the QueC family. Requires Zn(2+) as cofactor.

It carries out the reaction 7-carboxy-7-deazaguanine + NH4(+) + ATP = 7-cyano-7-deazaguanine + ADP + phosphate + H2O + H(+). It functions in the pathway purine metabolism; 7-cyano-7-deazaguanine biosynthesis. Catalyzes the ATP-dependent conversion of 7-carboxy-7-deazaguanine (CDG) to 7-cyano-7-deazaguanine (preQ(0)). This is 7-cyano-7-deazaguanine synthase from Nautilia profundicola (strain ATCC BAA-1463 / DSM 18972 / AmH).